The following is a 275-amino-acid chain: Large ribosomal subunit protein uL2 (275 aa).

Disordered stretches follow at residues 24–47 (IHKG…NHHG) and 227–261 (PVDH…KTRK).

The protein belongs to the universal ribosomal protein uL2 family. As to quaternary structure, part of the 50S ribosomal subunit. Forms a bridge to the 30S subunit in the 70S ribosome.

One of the primary rRNA binding proteins. Required for association of the 30S and 50S subunits to form the 70S ribosome, for tRNA binding and peptide bond formation. It has been suggested to have peptidyltransferase activity; this is somewhat controversial. Makes several contacts with the 16S rRNA in the 70S ribosome. The sequence is that of Large ribosomal subunit protein uL2 from Xylella fastidiosa (strain M12).